The following is a 546-amino-acid chain: Oncoprotein-induced transcript 3 protein (546 aa).

The signal sequence occupies residues 1–16 (MPLSLLLACLFTTVTL). N-linked (GlcNAc...) asparagine glycans are attached at residues N89 and N116. The region spanning 182–222 (DENECEHNNGGCSEICVNLKNSHRCACGVGRVLRSDGKTCE) is the EGF-like; calcium-binding domain. Intrachain disulfides connect C186/C197, C193/C206, and C208/C221. A ZP domain is found at 261 to 516 (TCQVPVLCKS…SRCAQGCHRR (256 aa)). The N-linked (GlcNAc...) asparagine glycan is linked to N299. The tract at residues 524-546 (DEDSAGLQSQTLTGGPISIDWEE) is disordered.

The protein localises to the nucleus envelope. In terms of biological role, may be involved in hepatocellular function and development. This Rattus norvegicus (Rat) protein is Oncoprotein-induced transcript 3 protein (Oit3).